The sequence spans 596 residues: Protein FlbA (596 aa).

TPR repeat units follow at residues 91–124 (GLAWHILAIAREKTGDFASSLRAYEAALALLPDH), 159–192 (VEGANNLACALRELNRESEAIEVLKAALGANPEA), 193–226 (AVLWNTLGTVLCNIGDAAGSIVFFDESLRLAPDF), and 228–260 (KAYHNRAFARLDLGEIEAALADCEAAMRSPGSP).

The chain is Protein FlbA (flbA) from Caulobacter vibrioides (strain ATCC 19089 / CIP 103742 / CB 15) (Caulobacter crescentus).